The chain runs to 706 residues: Triadin (706 aa).

Residues 1–28 form a disordered region; it reads MTEITAEGNASTTTTVIDSKNGSVPKSP. Residues 1–47 lie on the Cytoplasmic side of the membrane; the sequence is MTEITAEGNASTTTTVIDSKNGSVPKSPGKVLKRTVTEDLVTTFSSP. Positions 8-24 are enriched in polar residues; the sequence is GNASTTTTVIDSKNGSV. The chain crosses the membrane as a helical span at residues 48–68; sequence AAWLLVIALIITWSAVAVVMF. Topologically, residues 69-706 are lumenal; the sequence is DLVDYKNFSA…GKPNSPGPKQ (638 aa). N-linked (GlcNAc...) asparagine glycosylation is present at N75. A compositionally biased stretch (acidic residues) spans 117 to 127; the sequence is DGDEEDDEGDE. Disordered stretches follow at residues 117-265, 281-663, and 684-706; these read DGDE…EQKD, DLKP…KKQK, and FPVTPAQYPGESSGKPNSPGPKQ. Basic and acidic residues-rich tracts occupy residues 128-254, 309-358, 372-432, 443-518, 525-552, 570-588, and 599-621; these read DTAK…ESKE, PEEK…KSPD, TKKD…KEEV, AKKE…EVKP, IKKEEKPEQDIMKPEKTALHGKPEEKVL, KKAEHQEKEPPSIKTDKPK, and ESGKKKIEKSEKEIKVPARRESH. A glycan (N-linked (GlcNAc...) asparagine) is linked at N625. The segment covering 628–651 has biased composition (basic and acidic residues); that stretch reads KAEKPARGSKEGFEDVPASKKAKE.

In terms of assembly, interacts with CASQ2. Homooligomer of variable subunit number; disulfide-linked. Interacts with CASQ1 and RYR1 in skeletal muscle. Post-translationally, phosphorylated by CaMK2. In terms of processing, N-glycosylated. Detected in skeletal muscle and in heart (at protein level). Detected in skeletal muscle and in heart.

The protein resides in the sarcoplasmic reticulum membrane. In terms of biological role, contributes to the regulation of lumenal Ca2+ release via the sarcoplasmic reticulum calcium release channels RYR1 and RYR2, a key step in triggering skeletal and heart muscle contraction. Required for normal organization of the triad junction, where T-tubules and the sarcoplasmic reticulum terminal cisternae are in close contact. Required for normal skeletal muscle strength. Plays a role in excitation-contraction coupling in the heart and in regulating the rate of heart beats. The chain is Triadin (TRDN) from Oryctolagus cuniculus (Rabbit).